Reading from the N-terminus, the 415-residue chain is Serine hydroxymethyltransferase 1 (415 aa).

Residues Leu122 and 126–128 contribute to the (6S)-5,6,7,8-tetrahydrofolate site; that span reads GHL. Lys230 is subject to N6-(pyridoxal phosphate)lysine.

It belongs to the SHMT family. As to quaternary structure, homodimer. It depends on pyridoxal 5'-phosphate as a cofactor.

It is found in the cytoplasm. It catalyses the reaction (6R)-5,10-methylene-5,6,7,8-tetrahydrofolate + glycine + H2O = (6S)-5,6,7,8-tetrahydrofolate + L-serine. The protein operates within one-carbon metabolism; tetrahydrofolate interconversion. It functions in the pathway amino-acid biosynthesis; glycine biosynthesis; glycine from L-serine: step 1/1. Catalyzes the reversible interconversion of serine and glycine with tetrahydrofolate (THF) serving as the one-carbon carrier. This reaction serves as the major source of one-carbon groups required for the biosynthesis of purines, thymidylate, methionine, and other important biomolecules. Also exhibits THF-independent aldolase activity toward beta-hydroxyamino acids, producing glycine and aldehydes, via a retro-aldol mechanism. This is Serine hydroxymethyltransferase 1 from Burkholderia mallei (strain ATCC 23344).